We begin with the raw amino-acid sequence, 104 residues long: Small ribosomal subunit protein uS10 (104 aa).

Belongs to the universal ribosomal protein uS10 family. Part of the 30S ribosomal subunit.

Functionally, involved in the binding of tRNA to the ribosomes. In Hydrogenobaculum sp. (strain Y04AAS1), this protein is Small ribosomal subunit protein uS10.